The following is a 34-amino-acid chain: Photosystem II reaction center protein M (34 aa).

Residues Ile-5–Ile-25 traverse the membrane as a helical segment.

This sequence belongs to the PsbM family. In terms of assembly, PSII is composed of 1 copy each of membrane proteins PsbA, PsbB, PsbC, PsbD, PsbE, PsbF, PsbH, PsbI, PsbJ, PsbK, PsbL, PsbM, PsbT, PsbX, PsbY, PsbZ, Psb30/Ycf12, at least 3 peripheral proteins of the oxygen-evolving complex and a large number of cofactors. It forms dimeric complexes.

Its subcellular location is the plastid. The protein resides in the chloroplast thylakoid membrane. Functionally, one of the components of the core complex of photosystem II (PSII). PSII is a light-driven water:plastoquinone oxidoreductase that uses light energy to abstract electrons from H(2)O, generating O(2) and a proton gradient subsequently used for ATP formation. It consists of a core antenna complex that captures photons, and an electron transfer chain that converts photonic excitation into a charge separation. This subunit is found at the monomer-monomer interface. This is Photosystem II reaction center protein M from Calycanthus floridus var. glaucus (Eastern sweetshrub).